The sequence spans 878 residues: Pyruvate dehydrogenase phosphatase regulatory subunit, mitochondrial (878 aa).

The transit peptide at 1–26 directs the protein to the mitochondrion; sequence MLPRLLAVVRGPGSCRGWREGSPARG.

Belongs to the GcvT family. As to quaternary structure, heterodimer of a catalytic (PDP1) and a regulatory (PDPR) subunit.

It localises to the mitochondrion matrix. Decreases the sensitivity of PDP1 to magnesium ions, and this inhibition is reversed by the polyamine spermine. This chain is Pyruvate dehydrogenase phosphatase regulatory subunit, mitochondrial (PDPR), found in Bos taurus (Bovine).